The following is an 83-amino-acid chain: Protein YqgD (83 aa).

This sequence belongs to the YqgD family.

The polypeptide is Protein YqgD (yqgD) (Escherichia coli (strain K12)).